Consider the following 249-residue polypeptide: tRNA (guanine-N(1)-)-methyltransferase (249 aa).

S-adenosyl-L-methionine contacts are provided by residues Gly-113 and 133–138 (IGDFVV).

This sequence belongs to the RNA methyltransferase TrmD family. In terms of assembly, homodimer.

The protein resides in the cytoplasm. The catalysed reaction is guanosine(37) in tRNA + S-adenosyl-L-methionine = N(1)-methylguanosine(37) in tRNA + S-adenosyl-L-homocysteine + H(+). Its function is as follows. Specifically methylates guanosine-37 in various tRNAs. This chain is tRNA (guanine-N(1)-)-methyltransferase, found in Neisseria gonorrhoeae (strain ATCC 700825 / FA 1090).